The primary structure comprises 2300 residues: Protein Ycf2 (2300 aa).

1642–1649 contacts ATP; sequence GSIGTGRS.

Belongs to the Ycf2 family.

It is found in the plastid. The protein localises to the chloroplast stroma. In terms of biological role, probable ATPase of unknown function. Its presence in a non-photosynthetic plant (Epifagus virginiana) and experiments in tobacco indicate that it has an essential function which is probably not related to photosynthesis. The sequence is that of Protein Ycf2 from Vitis vinifera (Grape).